Reading from the N-terminus, the 314-residue chain is Olfactory receptor 1E1 (314 aa).

Residues 1 to 25 (MMGQNQTSISDFLLLGLPIQPEQQN) lie on the Extracellular side of the membrane. Asparagine 5 carries an N-linked (GlcNAc...) asparagine glycan. Residues 26–49 (LCYALFLAMYLTTLLGNLLIIVLI) traverse the membrane as a helical segment. Over 50 to 57 (RLDSHLHT) the chain is Cytoplasmic. The chain crosses the membrane as a helical span at residues 58-79 (PMYLFLSNLSFSDLCFSSVTIP). Residues 80–100 (KLLQNMQNQDPSIPYADCLTQ) are Extracellular-facing. Cysteines 97 and 189 form a disulfide. Residues 101-120 (MYFFLLFGDLESFLLVAMAY) form a helical membrane-spanning segment. The Cytoplasmic portion of the chain corresponds to 121 to 139 (DRYVAICFALHYTAIMSPM). The chain crosses the membrane as a helical span at residues 140–158 (LCLSLVALSWVLTTFHAML). The Extracellular segment spans residues 159 to 195 (HTLLMARLCFCADNVIPHFFCDMSALLKLACSDTRVN). The chain crosses the membrane as a helical span at residues 196–219 (EWVIFIMGGLIVVIPFLLILGSYA). At 220-236 (RIVSSILKVPSSKGICK) the chain is on the cytoplasmic side. A helical transmembrane segment spans residues 237–259 (AFSTCGSHLSVVSLFYGTVIGLY). At 260–272 (LCPSANSSTLKET) the chain is on the extracellular side. Residues 273 to 292 (VMAMMYTVVTPMLNPFIYSL) form a helical membrane-spanning segment. Residues 293–314 (RNGDMKGALSRVIHQKKTFFSL) are Cytoplasmic-facing.

It belongs to the G-protein coupled receptor 1 family.

It localises to the cell membrane. Its function is as follows. Odorant receptor. This Gorilla gorilla gorilla (Western lowland gorilla) protein is Olfactory receptor 1E1 (OR1E1).